The following is a 219-amino-acid chain: Proteasome subunit beta 2 (219 aa).

Residues 1–25 (MAEWIAGGLEGPAGRGLDERVVRSG) constitute a propeptide, removed in mature form; by autocatalysis. Residue Thr-26 is the Nucleophile of the active site.

The protein belongs to the peptidase T1B family. In terms of assembly, the 20S proteasome core is composed of 14 alpha and 14 beta subunits that assemble into four stacked heptameric rings, resulting in a barrel-shaped structure. The two inner rings, each composed of seven catalytic beta subunits, are sandwiched by two outer rings, each composed of seven alpha subunits. The catalytic chamber with the active sites is on the inside of the barrel. Has a gated structure, the ends of the cylinder being occluded by the N-termini of the alpha-subunits. Is capped at one or both ends by the proteasome regulatory ATPase, PAN.

Its subcellular location is the cytoplasm. The catalysed reaction is Cleavage of peptide bonds with very broad specificity.. The formation of the proteasomal ATPase PAN-20S proteasome complex, via the docking of the C-termini of PAN into the intersubunit pockets in the alpha-rings, triggers opening of the gate for substrate entry. Interconversion between the open-gate and close-gate conformations leads to a dynamic regulation of the 20S proteasome proteolysis activity. Functionally, component of the proteasome core, a large protease complex with broad specificity involved in protein degradation. In Aeropyrum pernix (strain ATCC 700893 / DSM 11879 / JCM 9820 / NBRC 100138 / K1), this protein is Proteasome subunit beta 2.